The chain runs to 323 residues: MTYLFTVLELLSFLVPVLLAVAFLTLVERKVLGYMQFRKGPNIVGPYGLLQPFADGLKLFIKETLKPSTASPYLFFLSPLLFMALALLLWNLMPVHTPTLNFQLSLLLVLGLSSLSVYAILGSGWAANSKYSLIGAIRAVAQTISYEISLALILLSLIIITSSFNLTYIMNAQEFSWFALSCLPLFYIWFVSTLAETNRAPFDLTEGESEIVSGYNVEYAGGPFALFFIAEYANIILMNLFSVVIFLGGPWPANELFPLNVLTIGLKTTLLVFLFLWVRAAYPRFRYDQLMFLTWKSYLPLSIGALCATITIVLTLGIYLPLF.

8 consecutive transmembrane segments (helical) span residues 4–24 (LFTV…VAFL), 73–93 (YLFF…WNLM), 106–126 (LLLV…SGWA), 150–170 (LALI…TYIM), 175–195 (FSWF…STLA), 226–246 (LFFI…VVIF), 256–276 (LFPL…FLFL), and 303–323 (IGAL…LPLF).

Belongs to the complex I subunit 1 family.

It is found in the mitochondrion inner membrane. The enzyme catalyses a ubiquinone + NADH + 5 H(+)(in) = a ubiquinol + NAD(+) + 4 H(+)(out). Core subunit of the mitochondrial membrane respiratory chain NADH dehydrogenase (Complex I) that is believed to belong to the minimal assembly required for catalysis. Complex I functions in the transfer of electrons from NADH to the respiratory chain. The immediate electron acceptor for the enzyme is believed to be ubiquinone. This Paracentrotus lividus (Common sea urchin) protein is NADH-ubiquinone oxidoreductase chain 1 (ND1).